The chain runs to 425 residues: Pyruvate dehydrogenase E1 component subunit alpha-3, chloroplastic (425 aa).

A chloroplast-targeting transit peptide spans 1–66; it reads MAAASSFTAA…VLPGNKAAPA (66 aa). Histidine 109, tyrosine 135, arginine 136, alanine 184, isoleucine 186, aspartate 224, glycine 225, and asparagine 253 together coordinate pyruvate. The thiamine diphosphate site is built by tyrosine 135, arginine 136, alanine 184, isoleucine 186, aspartate 224, glycine 225, asparagine 253, and histidine 322. A Mg(2+)-binding site is contributed by aspartate 224. Asparagine 253 provides a ligand contact to Mg(2+).

As to quaternary structure, tetramer of 2 alpha and 2 beta subunits. Thiamine diphosphate is required as a cofactor. Mg(2+) serves as cofactor.

The protein resides in the plastid. Its subcellular location is the chloroplast. The enzyme catalyses N(6)-[(R)-lipoyl]-L-lysyl-[protein] + pyruvate + H(+) = N(6)-[(R)-S(8)-acetyldihydrolipoyl]-L-lysyl-[protein] + CO2. In terms of biological role, the pyruvate dehydrogenase complex catalyzes the overall conversion of pyruvate to acetyl-CoA and CO(2). It contains multiple copies of three enzymatic components: pyruvate dehydrogenase (E1), dihydrolipoamide acetyltransferase (E2) and lipoamide dehydrogenase (E3). This Oryza sativa subsp. japonica (Rice) protein is Pyruvate dehydrogenase E1 component subunit alpha-3, chloroplastic.